The primary structure comprises 845 residues: Protein translocase subunit SecA (845 aa).

ATP-binding positions include Gln88, 106–110 (GEGKT), and Asp495. Residues 804 to 838 (SNRANRPQKKAKRQPIVKPDKPGRNDPCPCGSGKK) form a disordered region. The segment covering 809-818 (RPQKKAKRQP) has biased composition (basic residues). Residues Cys831, Cys833, Cys842, and Cys843 each contribute to the Zn(2+) site.

The protein belongs to the SecA family. As to quaternary structure, monomer and homodimer. Part of the essential Sec protein translocation apparatus which comprises SecA, SecYEG and auxiliary proteins SecDF. Other proteins may also be involved. The cofactor is Zn(2+).

The protein localises to the cell inner membrane. It is found in the cytoplasm. The catalysed reaction is ATP + H2O + cellular proteinSide 1 = ADP + phosphate + cellular proteinSide 2.. In terms of biological role, part of the Sec protein translocase complex. Interacts with the SecYEG preprotein conducting channel. Has a central role in coupling the hydrolysis of ATP to the transfer of proteins into and across the cell membrane, serving as an ATP-driven molecular motor driving the stepwise translocation of polypeptide chains across the membrane. In Halothermothrix orenii (strain H 168 / OCM 544 / DSM 9562), this protein is Protein translocase subunit SecA.